Reading from the N-terminus, the 186-residue chain is Nascent polypeptide-associated complex subunit beta (186 aa).

The region spanning 65–130 (GADDKKLQTT…GEEKELTELV (66 aa)) is the NAC-A/B domain. A disordered region spans residues 153 to 186 (QNMQKQAGAEGKKDEDEDDIPDLVEGENFESNVE). A compositionally biased stretch (acidic residues) spans 167–186 (EDEDDIPDLVEGENFESNVE).

This sequence belongs to the NAC-beta family. In terms of assembly, part of the nascent polypeptide-associated complex (NAC), consisting of egd2 and egd1. NAC associates with ribosomes via egd1.

Its subcellular location is the cytoplasm. It localises to the nucleus. Its function is as follows. Component of the nascent polypeptide-associated complex (NAC), a dynamic component of the ribosomal exit tunnel, protecting the emerging polypeptides from interaction with other cytoplasmic proteins to ensure appropriate nascent protein targeting. The NAC complex also promotes mitochondrial protein import by enhancing productive ribosome interactions with the outer mitochondrial membrane and blocks the inappropriate interaction of ribosomes translating non-secretory nascent polypeptides with translocation sites in the membrane of the endoplasmic reticulum. EGD1 may act as a transcription factor that exert a negative effect on the expression of several genes that are transcribed by RNA polymerase II. The protein is Nascent polypeptide-associated complex subunit beta (egd1) of Aspergillus fumigatus (strain ATCC MYA-4609 / CBS 101355 / FGSC A1100 / Af293) (Neosartorya fumigata).